Reading from the N-terminus, the 328-residue chain is DNA-directed RNA polymerase subunit alpha (328 aa).

The interval 1 to 234 (MQGSVTEFLK…EQLDAFVDLR (234 aa)) is alpha N-terminal domain (alpha-NTD). Residues 248–328 (FDPILLRPVD…NWPPASIAED (81 aa)) are alpha C-terminal domain (alpha-CTD).

It belongs to the RNA polymerase alpha chain family. In terms of assembly, homodimer. The RNAP catalytic core consists of 2 alpha, 1 beta, 1 beta' and 1 omega subunit. When a sigma factor is associated with the core the holoenzyme is formed, which can initiate transcription.

It catalyses the reaction RNA(n) + a ribonucleoside 5'-triphosphate = RNA(n+1) + diphosphate. DNA-dependent RNA polymerase catalyzes the transcription of DNA into RNA using the four ribonucleoside triphosphates as substrates. This Haemophilus influenzae (strain PittEE) protein is DNA-directed RNA polymerase subunit alpha.